A 78-amino-acid chain; its full sequence is MALIRKTFYFLFAVFFILVQLPSGCQAGLDFSQPFPSGEFAVCESCKLGRGKCRKECLENEKPDGNCRLNFLCCRQRI.

Residues 1-27 form the signal peptide; sequence MALIRKTFYFLFAVFFILVQLPSGCQA. Cystine bridges form between cysteine 43/cysteine 74, cysteine 53/cysteine 67, and cysteine 57/cysteine 73.

Belongs to the beta-defensin family.

Its subcellular location is the secreted. Has antimicrobial activity. This is Beta-defensin 105A (DEFB105A) from Gorilla gorilla gorilla (Western lowland gorilla).